Reading from the N-terminus, the 360-residue chain is Photosystem II protein D1 2 (360 aa).

3 helical membrane-spanning segments follow: residues 29–46, 118–133, and 142–156; these read YIGWFGVLMVPTLLSATI, HFLIGIFAYLGREWEF, and WICVAYSAPVAAATA. H118 is a chlorophyll a binding site. Residue Y126 coordinates pheophytin a. Residues D170 and E189 each coordinate [CaMn4O5] cluster. Residues 197-218 form a helical membrane-spanning segment; that stretch reads LHMFGVAGVFGGSLFAAMHGSL. H198 is a chlorophyll a binding site. Residues H215 and 264–265 contribute to the a quinone site; that span reads SF. H215 is a binding site for Fe cation. A Fe cation-binding site is contributed by H272. A helical transmembrane segment spans residues 274-288; the sequence is FLAAWPVIGIWLTSL. Residues H332, E333, D342, and A344 each coordinate [CaMn4O5] cluster. A propeptide spanning residues 345–360 is cleaved from the precursor; it reads GTESAPVAFAAALGDG.

It belongs to the reaction center PufL/M/PsbA/D family. PSII is composed of 1 copy each of membrane proteins PsbA, PsbB, PsbC, PsbD, PsbE, PsbF, PsbH, PsbI, PsbJ, PsbK, PsbL, PsbM, PsbT, PsbX, Psb30/Ycf12, peripheral proteins PsbO, CyanoQ (PsbQ), PsbU, PsbV and a large number of cofactors. It forms dimeric complexes. It depends on The D1/D2 heterodimer binds P680, chlorophylls that are the primary electron donor of PSII, and subsequent electron acceptors. It shares a non-heme iron and each subunit binds pheophytin, quinone, additional chlorophylls, carotenoids and lipids. D1 provides most of the ligands for the Mn4-Ca-O5 cluster of the oxygen-evolving complex (OEC). There is also a Cl(-1) ion associated with D1 and D2, which is required for oxygen evolution. The PSII complex binds additional chlorophylls, carotenoids and specific lipids. as a cofactor. Tyr-161 forms a radical intermediate that is referred to as redox-active TyrZ, YZ or Y-Z. In terms of processing, C-terminally processed by CtpA; processing is essential to allow assembly of the oxygen-evolving complex and thus photosynthetic growth.

Its subcellular location is the cell inner membrane. The catalysed reaction is 2 a plastoquinone + 4 hnu + 2 H2O = 2 a plastoquinol + O2. Its function is as follows. Photosystem II (PSII) is a light-driven water:plastoquinone oxidoreductase that uses light energy to abstract electrons from H(2)O, generating O(2) and a proton gradient subsequently used for ATP formation. It consists of a core antenna complex that captures photons, and an electron transfer chain that converts photonic excitation into a charge separation. The D1/D2 (PsbA/PsbD) reaction center heterodimer binds P680, the primary electron donor of PSII as well as several subsequent electron acceptors. This is Photosystem II protein D1 2 from Gloeobacter violaceus (strain ATCC 29082 / PCC 7421).